The sequence spans 468 residues: Probable ubiquitin carboxyl-terminal hydrolase R319 (468 aa).

The region spanning T42–S462 is the USP domain. C51 acts as the Nucleophile in catalysis. The Proton acceptor role is filled by H420.

Belongs to the peptidase C19 family.

The enzyme catalyses Thiol-dependent hydrolysis of ester, thioester, amide, peptide and isopeptide bonds formed by the C-terminal Gly of ubiquitin (a 76-residue protein attached to proteins as an intracellular targeting signal).. The chain is Probable ubiquitin carboxyl-terminal hydrolase R319 from Acanthamoeba polyphaga (Amoeba).